The sequence spans 240 residues: Uridylate kinase (240 aa).

ATP is bound at residue 13 to 16; that stretch reads KLSG. The involved in allosteric activation by GTP stretch occupies residues 21 to 26; sequence GEKGFG. Gly-55 provides a ligand contact to UMP. Residues Gly-56 and Arg-60 each contribute to the ATP site. UMP contacts are provided by residues Asp-75 and 136-143; that span reads IGNPYFST. Positions 164, 170, and 173 each coordinate ATP.

Belongs to the UMP kinase family. As to quaternary structure, homohexamer.

It is found in the cytoplasm. It carries out the reaction UMP + ATP = UDP + ADP. It functions in the pathway pyrimidine metabolism; CTP biosynthesis via de novo pathway; UDP from UMP (UMPK route): step 1/1. Its activity is regulated as follows. Allosterically activated by GTP. Inhibited by UTP. Catalyzes the reversible phosphorylation of UMP to UDP. This chain is Uridylate kinase, found in Staphylococcus aureus (strain Newman).